Here is a 147-residue protein sequence, read N- to C-terminus: 3-hydroxyacyl-[acyl-carrier-protein] dehydratase FabZ (147 aa).

The active site involves H48.

This sequence belongs to the thioester dehydratase family. FabZ subfamily.

It is found in the cytoplasm. It catalyses the reaction a (3R)-hydroxyacyl-[ACP] = a (2E)-enoyl-[ACP] + H2O. In terms of biological role, involved in unsaturated fatty acids biosynthesis. Catalyzes the dehydration of short chain beta-hydroxyacyl-ACPs and long chain saturated and unsaturated beta-hydroxyacyl-ACPs. The protein is 3-hydroxyacyl-[acyl-carrier-protein] dehydratase FabZ of Aliarcobacter butzleri (strain RM4018) (Arcobacter butzleri).